The sequence spans 635 residues: MTLFILAETSAGYALLKAKDKKLLKRHDIVAETQTAEGVSNLMKLKNFQKFDSAATALEETASLVEGKVTPRLANLLESIKDEKKVSLAVADPKLGNAIAKLPLAIQPIADSTTTDLYRAIREHLPTLIPGLLPGDMSTMSLGLSHSLARHKLKFSPDKIDTMIVQAIALLDDLDKELNTYAMRVKEWYGWHFPELAKILNDNIAYSKVVLKVGMRSNFGETDLAEILPEEIEAVVKAAADRSMGTEISNEDLDNIQALAEEVIGFSTYRQQLASYLAARMTAIAPNLTALVGELVGARLIAHAGSLVNLSKSPASTIQILGAEKALFRALKTKHDTPKYGLIYHASLIGQATGKNKGKMARYLAAKAAIGLRVDALTDWPVDADGNEPTEEEKAALGMQSRYYLEKKLAAMEGKPIKPRGVGIAPNGIPTAQPKKWEINEARKYNPDADGFAGDEDLAESSPKKQKKEKKDKKKKLVEEIKESEDGSESEEESDEDVEMADKSATNGSMADANASSEERSDREEKSKKSKEKSLEKKSKKEDKKSKKQKSGSGPSVEEMAAKAGLSVSRYQRKLERGEIVFDSEGNPSYISKKDLKKAKKEAKKAAKAAEKEAGKKRKRAEEDDEKKTKKKSKV.

The 131-residue stretch at 284-414 folds into the Nop domain; sequence IAPNLTALVG…LEKKLAAMEG (131 aa). The segment at 445 to 635 is disordered; the sequence is YNPDADGFAG…EKKTKKKSKV (191 aa). Residues 464–476 are compositionally biased toward basic residues; sequence KKQKKEKKDKKKK. Over residues 486–499 the composition is skewed to acidic residues; that stretch reads DGSESEEESDEDVE. 2 stretches are compositionally biased toward basic and acidic residues: residues 517–545 and 604–628; these read SEERSDREEKSKKSKEKSLEKKSKKEDKK and KKAAKAAEKEAGKKRKRAEEDDEKK.

It belongs to the NOP5/NOP56 family.

It is found in the nucleus. Its subcellular location is the nucleolus. In terms of biological role, required for pre-18S rRNA processing. May bind microtubules. The polypeptide is Nucleolar protein 58 (NOP58) (Ajellomyces capsulatus (strain NAm1 / WU24) (Darling's disease fungus)).